Here is a 284-residue protein sequence, read N- to C-terminus: MRPPISKSWPAPAKLNLFLHVTGQRDDGYHELQTLFQFIDHCDYLDFQVNLCGEIKLHSELSKVVADKDNLILQAAKSLQKHAGVTQGADIWLEKLLPMGGGLGGGSSDAATTLVALNALWNINYHVDILAEIGLKLGADVPVFIHGLASFAEGVGEQLKPVLPAEKWYLVLVPNVHVSTQAIFQSPELTRNTPKLSLSNLMSQHWSNDCEKLVIAHYPQVANALSWLVEYAPSRMTGTGACVFGEFEQEQQALAVLAELPPNMTGFVAKGMNRSPLLERLANA.

The active site involves lysine 14. An ATP-binding site is contributed by 98 to 108; the sequence is PMGGGLGGGSS. The active site involves aspartate 140.

The protein belongs to the GHMP kinase family. IspE subfamily.

It catalyses the reaction 4-CDP-2-C-methyl-D-erythritol + ATP = 4-CDP-2-C-methyl-D-erythritol 2-phosphate + ADP + H(+). It participates in isoprenoid biosynthesis; isopentenyl diphosphate biosynthesis via DXP pathway; isopentenyl diphosphate from 1-deoxy-D-xylulose 5-phosphate: step 3/6. In terms of biological role, catalyzes the phosphorylation of the position 2 hydroxy group of 4-diphosphocytidyl-2C-methyl-D-erythritol. The chain is 4-diphosphocytidyl-2-C-methyl-D-erythritol kinase from Shewanella denitrificans (strain OS217 / ATCC BAA-1090 / DSM 15013).